The sequence spans 160 residues: 6,7-dimethyl-8-ribityllumazine synthase (160 aa).

5-amino-6-(D-ribitylamino)uracil-binding positions include phenylalanine 22, 57-59 (TYE), and 81-83 (TII). 86–87 (QT) provides a ligand contact to (2S)-2-hydroxy-3-oxobutyl phosphate. Histidine 89 (proton donor) is an active-site residue. A 5-amino-6-(D-ribitylamino)uracil-binding site is contributed by leucine 114. Arginine 128 provides a ligand contact to (2S)-2-hydroxy-3-oxobutyl phosphate.

This sequence belongs to the DMRL synthase family. Forms an icosahedral capsid composed of 60 subunits, arranged as a dodecamer of pentamers.

The catalysed reaction is (2S)-2-hydroxy-3-oxobutyl phosphate + 5-amino-6-(D-ribitylamino)uracil = 6,7-dimethyl-8-(1-D-ribityl)lumazine + phosphate + 2 H2O + H(+). It participates in cofactor biosynthesis; riboflavin biosynthesis; riboflavin from 2-hydroxy-3-oxobutyl phosphate and 5-amino-6-(D-ribitylamino)uracil: step 1/2. Its function is as follows. Catalyzes the formation of 6,7-dimethyl-8-ribityllumazine by condensation of 5-amino-6-(D-ribitylamino)uracil with 3,4-dihydroxy-2-butanone 4-phosphate. This is the penultimate step in the biosynthesis of riboflavin. This Buchnera aphidicola subsp. Acyrthosiphon pisum (strain Tuc7) protein is 6,7-dimethyl-8-ribityllumazine synthase.